The primary structure comprises 93 residues: Exodeoxyribonuclease 7 small subunit (93 aa).

Residues 61-75 (IDDNGDEKVYEKQTD) show a composition bias toward basic and acidic residues. The disordered stretch occupies residues 61 to 93 (IDDNGDEKVYEKQTDDPSNNGGGNRGFGSADEQ).

The protein belongs to the XseB family. As to quaternary structure, heterooligomer composed of large and small subunits.

The protein localises to the cytoplasm. The enzyme catalyses Exonucleolytic cleavage in either 5'- to 3'- or 3'- to 5'-direction to yield nucleoside 5'-phosphates.. In terms of biological role, bidirectionally degrades single-stranded DNA into large acid-insoluble oligonucleotides, which are then degraded further into small acid-soluble oligonucleotides. This Limosilactobacillus reuteri (strain DSM 20016) (Lactobacillus reuteri) protein is Exodeoxyribonuclease 7 small subunit.